A 107-amino-acid polypeptide reads, in one-letter code: Flagellar hook-basal body complex protein FliE (107 aa).

The protein belongs to the FliE family.

The protein localises to the bacterial flagellum basal body. This chain is Flagellar hook-basal body complex protein FliE, found in Mesorhizobium japonicum (strain LMG 29417 / CECT 9101 / MAFF 303099) (Mesorhizobium loti (strain MAFF 303099)).